The chain runs to 327 residues: MTVRFLFEALNMAIDEEMARNDKVALLGEDIGHYGGSYKVTQNLYAKYGEHRVIDTPIAENSFVGAAIGAAMTGLVTVVEGMNMGFILLAFSQISNNMGMLSATSGGHYHIPIVLRGPGGVGKQLGAEHSQRLECYFQSVPGLQIVACSTPYNAKGLLKSAIRSKNPIFFLEHVLLYNLKAEVPDNDYVLPLEKAEIVRQGNDITILTYSRMRYNVIQAVKVLVEKGYDPEIIDLISLKPFDIETIGKSIQKTHKVLIVEESMMTGGISNVLQSLILENFFDDLDNRPMCLSSPNVPTPYSGPLEEVSIVQTADIIESVEQILTNKM.

Thiamine diphosphate is bound at residue glutamate 60. The K(+) site is built by isoleucine 113, alanine 161, isoleucine 162, and asparagine 166.

In terms of assembly, heterodimer of an alpha and a beta chain. It depends on thiamine diphosphate as a cofactor.

Its subcellular location is the plastid. The protein localises to the chloroplast. The catalysed reaction is N(6)-[(R)-lipoyl]-L-lysyl-[protein] + pyruvate + H(+) = N(6)-[(R)-S(8)-acetyldihydrolipoyl]-L-lysyl-[protein] + CO2. Its function is as follows. The pyruvate dehydrogenase complex catalyzes the overall conversion of pyruvate to acetyl-CoA and CO(2). It contains multiple copies of three enzymatic components: pyruvate dehydrogenase (E1), dihydrolipoamide acetyltransferase (E2) and lipoamide dehydrogenase (E3). The protein is Pyruvate dehydrogenase E1 component subunit beta (pdhB) of Mesostigma viride (Green alga).